Consider the following 1919-residue polypeptide: Protein TIC 214 (1919 aa).

6 consecutive transmembrane segments (helical) span residues 18-38 (IINS…FSIG), 67-87 (FITG…HLAL), 90-110 (PHTI…WNNH), 127-147 (LSIQ…HFIL), 175-195 (VGWL…LVWI), and 224-244 (IFSI…PSPI). Disordered regions lie at residues 250–375 (KETP…GKEK), 1107–1129 (IKSI…NKRS), and 1606–1636 (ELKN…RRFV). Acidic residues-rich tracts occupy residues 259–269 (GESEEETDVEI), 278–288 (GESEEETDVEI), 297–307 (GESEEETDVEI), 316–328 (GESE…EIET), and 355–366 (EKEDPDKIDETE). A compositionally biased stretch (basic residues) spans 1107-1117 (IKSITKEKKKG). Residues 1606–1623 (ELKNRNQEEKEPADRGDL) show a composition bias toward basic and acidic residues. The segment covering 1626–1636 (DAQNQGNRRFV) has biased composition (polar residues).

Belongs to the TIC214 family. In terms of assembly, part of the Tic complex.

It localises to the plastid. It is found in the chloroplast inner membrane. In terms of biological role, involved in protein precursor import into chloroplasts. May be part of an intermediate translocation complex acting as a protein-conducting channel at the inner envelope. The sequence is that of Protein TIC 214 from Panax ginseng (Korean ginseng).